A 458-amino-acid polypeptide reads, in one-letter code: Purple acid phosphatase 23 (458 aa).

Residues 1–19 (MTLLIMITLTSISLLLAAA) form the signal peptide. 3 N-linked (GlcNAc...) asparagine glycosylation sites follow: Asn59, Asn121, and Asn136. Residue Asp194 participates in Fe cation binding. A glycan (N-linked (GlcNAc...) asparagine) is linked at Asn200. Asp221 and Tyr224 together coordinate Fe cation. Mn(2+) is bound at residue Asp221. Residue Asn278 participates in Mn(2+) binding. Asn278 contacts substrate. N-linked (GlcNAc...) asparagine glycosylation occurs at Asn331. Position 360 (His360) interacts with Mn(2+). His370 (proton donor) is an active-site residue. His397 lines the Mn(2+) pocket. 397-399 (HVH) is a substrate binding site. Position 399 (His399) interacts with Fe cation. Asn409 and Asn455 each carry an N-linked (GlcNAc...) asparagine glycan.

It belongs to the metallophosphoesterase superfamily. Purple acid phosphatase family. Homodimer. Fe cation is required as a cofactor. Mn(2+) serves as cofactor. As to expression, specifically expressed in flowers.

It is found in the secreted. The catalysed reaction is a phosphate monoester + H2O = an alcohol + phosphate. Functionally, acid phosphatase activity with ATP, ADP, dATP, pyrophosphate, polyphosphate, phosphoserine and phosphothreonine. Low or no activity with phosphotyrosine, AMP and phytate. This is Purple acid phosphatase 23 (PAP23) from Arabidopsis thaliana (Mouse-ear cress).